The primary structure comprises 648 residues: Macrolide export ATP-binding/permease protein MacB (648 aa).

In terms of domain architecture, ABC transporter spans 5-243 (LELKDIRRSY…AGGTEPVVNT (239 aa)). Position 41-48 (41-48 (GASGSGKS)) interacts with ATP. Transmembrane regions (helical) follow at residues 273 to 293 (LLTM…VVVG), 523 to 543 (LFLT…VMNI), 576 to 596 (AVLV…LIAF), and 600 to 620 (LFLP…AFLC).

The protein belongs to the ABC transporter superfamily. Macrolide exporter (TC 3.A.1.122) family. As to quaternary structure, homodimer. Part of the tripartite efflux system MacAB-TolC, which is composed of an inner membrane transporter, MacB, a periplasmic membrane fusion protein, MacA, and an outer membrane component, TolC. The complex forms a large protein conduit and can translocate molecules across both the inner and outer membranes. Interacts with MacA.

It is found in the cell inner membrane. In terms of biological role, part of the tripartite efflux system MacAB-TolC. MacB is a non-canonical ABC transporter that contains transmembrane domains (TMD), which form a pore in the inner membrane, and an ATP-binding domain (NBD), which is responsible for energy generation. Confers resistance against macrolides. The polypeptide is Macrolide export ATP-binding/permease protein MacB (Shigella sonnei (strain Ss046)).